Consider the following 359-residue polypeptide: Aminomethyltransferase (359 aa).

This sequence belongs to the GcvT family. The glycine cleavage system is composed of four proteins: P, T, L and H.

The catalysed reaction is N(6)-[(R)-S(8)-aminomethyldihydrolipoyl]-L-lysyl-[protein] + (6S)-5,6,7,8-tetrahydrofolate = N(6)-[(R)-dihydrolipoyl]-L-lysyl-[protein] + (6R)-5,10-methylene-5,6,7,8-tetrahydrofolate + NH4(+). The glycine cleavage system catalyzes the degradation of glycine. The protein is Aminomethyltransferase of Idiomarina loihiensis (strain ATCC BAA-735 / DSM 15497 / L2-TR).